We begin with the raw amino-acid sequence, 197 residues long: Ribonuclease HII (197 aa).

Residues glutamate 9–phenylalanine 197 enclose the RNase H type-2 domain. A divalent metal cation contacts are provided by aspartate 15, glutamate 16, and aspartate 107.

The protein belongs to the RNase HII family. Mn(2+) is required as a cofactor. Mg(2+) serves as cofactor.

The protein localises to the cytoplasm. It carries out the reaction Endonucleolytic cleavage to 5'-phosphomonoester.. Endonuclease that specifically degrades the RNA of RNA-DNA hybrids. The polypeptide is Ribonuclease HII (Haemophilus influenzae (strain 86-028NP)).